Here is a 308-residue protein sequence, read N- to C-terminus: HTH-type transcriptional activator AllS (308 aa).

Residues 2 to 59 (FDPETLRTFIAVAETGSFSKAAERLCKTTATISYRIKLLEENTGVALFFRTTRSVTLT) enclose the HTH lysR-type domain. The H-T-H motif DNA-binding region spans 19-38 (FSKAAERLCKTTATISYRIK).

This sequence belongs to the LysR transcriptional regulatory family.

Positive regulator essential for the expression of allD operon. Binds to the allD promoter. The polypeptide is HTH-type transcriptional activator AllS (allS) (Escherichia coli O1:K1 / APEC).